Here is a 207-residue protein sequence, read N- to C-terminus: Large ribosomal subunit protein uL18 (207 aa).

This sequence belongs to the universal ribosomal protein uL18 family. As to quaternary structure, part of the 50S ribosomal subunit. Contacts the 5S and 23S rRNAs.

This is one of the proteins that bind and probably mediate the attachment of the 5S RNA into the large ribosomal subunit, where it forms part of the central protuberance. This Caldivirga maquilingensis (strain ATCC 700844 / DSM 13496 / JCM 10307 / IC-167) protein is Large ribosomal subunit protein uL18.